A 259-amino-acid polypeptide reads, in one-letter code: Global transcriptional regulator CodY (259 aa).

Residues 1–155 (MNLLEKTRKI…GATVVGMEIL (155 aa)) form a GAF domain region. A DNA-binding region (H-T-H motif) is located at residues 203-222 (ASKIADRVGITRSVIVNALR). S215 is subject to Phosphoserine.

It belongs to the CodY family.

The protein resides in the cytoplasm. In terms of biological role, DNA-binding global transcriptional regulator which is involved in the adaptive response to starvation and acts by directly or indirectly controlling the expression of numerous genes in response to nutrient availability. During rapid exponential growth, CodY is highly active and represses genes whose products allow adaptation to nutrient depletion. This is Global transcriptional regulator CodY from Anoxybacillus flavithermus (strain DSM 21510 / WK1).